A 200-amino-acid chain; its full sequence is Mediator of RNA polymerase II transcription subunit 29 (200 aa).

Low complexity-rich tracts occupy residues 1 to 21 (MAASQQQASAASSAAGVSGPS) and 36 to 48 (AQLVGPAQSGLLQ). The disordered stretch occupies residues 1–48 (MAASQQQASAASSAAGVSGPSSAGGPGPQQQPQPPAQLVGPAQSGLLQ). N-acetylalanine is present on alanine 2.

The protein belongs to the Mediator complex subunit 29 family. In terms of assembly, component of the Mediator complex, which is composed of MED1, MED4, MED6, MED7, MED8, MED9, MED10, MED11, MED12, MED13, MED13L, MED14, MED15, MED16, MED17, MED18, MED19, MED20, MED21, MED22, MED23, MED24, MED25, MED26, MED27, MED29, MED30, MED31, CCNC, CDK8 and CDC2L6/CDK11. The MED12, MED13, CCNC and CDK8 subunits form a distinct module termed the CDK8 module. Mediator containing the CDK8 module is less active than Mediator lacking this module in supporting transcriptional activation. Individual preparations of the Mediator complex lacking one or more distinct subunits have been variously termed ARC, CRSP, DRIP, PC2, SMCC and TRAP. Associates with the MED18/MED20 heteromer.

Its subcellular location is the nucleus. Its function is as follows. Component of the Mediator complex, a coactivator involved in the regulated transcription of nearly all RNA polymerase II-dependent genes. Mediator functions as a bridge to convey information from gene-specific regulatory proteins to the basal RNA polymerase II transcription machinery. Mediator is recruited to promoters by direct interactions with regulatory proteins and serves as a scaffold for the assembly of a functional preinitiation complex with RNA polymerase II and the general transcription factors. The polypeptide is Mediator of RNA polymerase II transcription subunit 29 (MED29) (Pongo abelii (Sumatran orangutan)).